The sequence spans 416 residues: uncharacterized protein (416 aa).

Residues 341–360 form a disordered region; it reads EDREKGSQHTNNTHHHKRNL.

This is an uncharacterized protein from Human cytomegalovirus (strain AD169) (HHV-5).